Here is a 282-residue protein sequence, read N- to C-terminus: 1D-myo-inositol 2-acetamido-2-deoxy-alpha-D-glucopyranoside deacetylase (282 aa).

Residues His-6, Asp-9, and His-141 each contribute to the Zn(2+) site.

This sequence belongs to the MshB deacetylase family. The cofactor is Zn(2+).

The catalysed reaction is 1D-myo-inositol 2-acetamido-2-deoxy-alpha-D-glucopyranoside + H2O = 1D-myo-inositol 2-amino-2-deoxy-alpha-D-glucopyranoside + acetate. In terms of biological role, catalyzes the deacetylation of 1D-myo-inositol 2-acetamido-2-deoxy-alpha-D-glucopyranoside (GlcNAc-Ins) in the mycothiol biosynthesis pathway. The polypeptide is 1D-myo-inositol 2-acetamido-2-deoxy-alpha-D-glucopyranoside deacetylase (Nocardiopsis dassonvillei (strain ATCC 23218 / DSM 43111 / CIP 107115 / JCM 7437 / KCTC 9190 / NBRC 14626 / NCTC 10488 / NRRL B-5397 / IMRU 509) (Actinomadura dassonvillei)).